We begin with the raw amino-acid sequence, 420 residues long: Riboflavin biosynthesis protein RibBA (420 aa).

The interval 1-202 (MTTFGTIEQA…IADLVAYRRR (202 aa)) is DHBP synthase. Residues 28–29 (RE), Asp33, 141–145 (RPGHT), and Glu165 contribute to the D-ribulose 5-phosphate site. Glu29 contributes to the Mg(2+) binding site. His144 is a Mg(2+) binding site. Residues 203–420 (TEKQVELVAE…RAVVGDGIGA (218 aa)) are GTP cyclohydrolase II. 253–257 (RVHSE) contacts GTP. Residues Cys258, Cys269, and Cys271 each contribute to the Zn(2+) site. GTP contacts are provided by residues Gln274, 297-299 (EGR), and Thr319. Asp331 (proton acceptor; for GTP cyclohydrolase activity) is an active-site residue. The Nucleophile; for GTP cyclohydrolase activity role is filled by Arg333. GTP-binding residues include Thr354 and Lys359.

In the N-terminal section; belongs to the DHBP synthase family. It in the C-terminal section; belongs to the GTP cyclohydrolase II family. Mg(2+) is required as a cofactor. Requires Mn(2+) as cofactor. Zn(2+) serves as cofactor.

The enzyme catalyses D-ribulose 5-phosphate = (2S)-2-hydroxy-3-oxobutyl phosphate + formate + H(+). The catalysed reaction is GTP + 4 H2O = 2,5-diamino-6-hydroxy-4-(5-phosphoribosylamino)-pyrimidine + formate + 2 phosphate + 3 H(+). It functions in the pathway cofactor biosynthesis; riboflavin biosynthesis; 2-hydroxy-3-oxobutyl phosphate from D-ribulose 5-phosphate: step 1/1. The protein operates within cofactor biosynthesis; riboflavin biosynthesis; 5-amino-6-(D-ribitylamino)uracil from GTP: step 1/4. In terms of biological role, catalyzes the conversion of D-ribulose 5-phosphate to formate and 3,4-dihydroxy-2-butanone 4-phosphate. Functionally, catalyzes the conversion of GTP to 2,5-diamino-6-ribosylamino-4(3H)-pyrimidinone 5'-phosphate (DARP), formate and pyrophosphate. The polypeptide is Riboflavin biosynthesis protein RibBA (Salinispora arenicola (strain CNS-205)).